Here is a 340-residue protein sequence, read N- to C-terminus: Anthranilate phosphoribosyltransferase (340 aa).

5-phospho-alpha-D-ribose 1-diphosphate is bound by residues Gly78, Gly81–Asp82, Thr86, Asn88–Thr91, Lys106–Ser114, and Ser118. An anthranilate-binding site is contributed by Gly78. Residue Ser90 participates in Mg(2+) binding. An anthranilate-binding site is contributed by Asn109. Arg164 contributes to the anthranilate binding site. The Mg(2+) site is built by Asp223 and Glu224.

Belongs to the anthranilate phosphoribosyltransferase family. As to quaternary structure, homodimer. It depends on Mg(2+) as a cofactor.

The enzyme catalyses N-(5-phospho-beta-D-ribosyl)anthranilate + diphosphate = 5-phospho-alpha-D-ribose 1-diphosphate + anthranilate. The protein operates within amino-acid biosynthesis; L-tryptophan biosynthesis; L-tryptophan from chorismate: step 2/5. Catalyzes the transfer of the phosphoribosyl group of 5-phosphorylribose-1-pyrophosphate (PRPP) to anthranilate to yield N-(5'-phosphoribosyl)-anthranilate (PRA). This Bacillus pumilus (strain SAFR-032) protein is Anthranilate phosphoribosyltransferase.